The following is a 152-amino-acid chain: SsrA-binding protein (152 aa).

The protein belongs to the SmpB family.

The protein localises to the cytoplasm. In terms of biological role, required for rescue of stalled ribosomes mediated by trans-translation. Binds to transfer-messenger RNA (tmRNA), required for stable association of tmRNA with ribosomes. tmRNA and SmpB together mimic tRNA shape, replacing the anticodon stem-loop with SmpB. tmRNA is encoded by the ssrA gene; the 2 termini fold to resemble tRNA(Ala) and it encodes a 'tag peptide', a short internal open reading frame. During trans-translation Ala-aminoacylated tmRNA acts like a tRNA, entering the A-site of stalled ribosomes, displacing the stalled mRNA. The ribosome then switches to translate the ORF on the tmRNA; the nascent peptide is terminated with the 'tag peptide' encoded by the tmRNA and targeted for degradation. The ribosome is freed to recommence translation, which seems to be the essential function of trans-translation. The polypeptide is SsrA-binding protein (Rickettsia peacockii (strain Rustic)).